The following is a 246-amino-acid chain: NAD(P)H-quinone oxidoreductase subunit K, organellar chromatophore (246 aa).

[4Fe-4S] cluster-binding residues include cysteine 58, cysteine 59, cysteine 123, and cysteine 154.

Belongs to the complex I 20 kDa subunit family. As to quaternary structure, NDH-1 is composed of 14 different subunits. Subunits nuoB, C, D, E, F, and G constitute the peripheral sector of the complex. The cofactor is [4Fe-4S] cluster.

The protein resides in the plastid. The protein localises to the organellar chromatophore thylakoid membrane. The enzyme catalyses a quinone + NADH + H(+) = a quinol + NAD(+). Its function is as follows. NDH-1 shuttles electrons from NADH, via FMN and iron-sulfur (Fe-S) centers, to quinones in the respiratory chain. Couples the redox reaction to proton translocation (for every two electrons transferred, four hydrogen ions are translocated across the cytoplasmic membrane), and thus conserves the redox energy in a proton gradient. In Paulinella chromatophora, this protein is NAD(P)H-quinone oxidoreductase subunit K, organellar chromatophore.